The following is a 259-amino-acid chain: Putative aldolase class 2 protein PA3430 (259 aa).

Zn(2+)-binding residues include H113, H115, and H176.

The protein belongs to the aldolase class II family. It depends on Zn(2+) as a cofactor.

In Pseudomonas aeruginosa (strain ATCC 15692 / DSM 22644 / CIP 104116 / JCM 14847 / LMG 12228 / 1C / PRS 101 / PAO1), this protein is Putative aldolase class 2 protein PA3430.